The chain runs to 210 residues: Thymidylate kinase (210 aa).

10–17 contributes to the ATP binding site; the sequence is GPEGAGKS.

It belongs to the thymidylate kinase family.

It carries out the reaction dTMP + ATP = dTDP + ADP. Its function is as follows. Phosphorylation of dTMP to form dTDP in both de novo and salvage pathways of dTTP synthesis. The protein is Thymidylate kinase of Pseudomonas paraeruginosa (strain DSM 24068 / PA7) (Pseudomonas aeruginosa (strain PA7)).